A 419-amino-acid chain; its full sequence is UDP-N-acetylglucosamine 1-carboxyvinyltransferase (419 aa).

Lys22 to Asn23 is a binding site for phosphoenolpyruvate. Position 92 (Arg92) interacts with UDP-N-acetyl-alpha-D-glucosamine. The active-site Proton donor is Cys116. Cys116 bears the 2-(S-cysteinyl)pyruvic acid O-phosphothioketal mark. The UDP-N-acetyl-alpha-D-glucosamine site is built by Asp306 and Ile328.

Belongs to the EPSP synthase family. MurA subfamily.

The protein resides in the cytoplasm. The enzyme catalyses phosphoenolpyruvate + UDP-N-acetyl-alpha-D-glucosamine = UDP-N-acetyl-3-O-(1-carboxyvinyl)-alpha-D-glucosamine + phosphate. It functions in the pathway cell wall biogenesis; peptidoglycan biosynthesis. Its function is as follows. Cell wall formation. Adds enolpyruvyl to UDP-N-acetylglucosamine. This Pseudoalteromonas translucida (strain TAC 125) protein is UDP-N-acetylglucosamine 1-carboxyvinyltransferase.